A 666-amino-acid polypeptide reads, in one-letter code: ATP-dependent RNA helicase MSS116, mitochondrial (666 aa).

A mitochondrion-targeting transit peptide spans M1–L22. A compositionally biased stretch (basic and acidic residues) spans R38–D60. Residues R38–S131 are disordered. Residues N120 to S131 show a composition bias toward polar residues. The Q motif signature appears at S159–Q187. The Helicase ATP-binding domain maps to P192 to L379. A205–T212 is a binding site for ATP. The short motif at D320–D323 is the DEAD box element. The Helicase C-terminal domain occupies N408–H560.

It belongs to the DEAD box helicase family. DDX18/HAS1 subfamily.

The protein resides in the mitochondrion matrix. The catalysed reaction is ATP + H2O = ADP + phosphate + H(+). ATP-dependent RNA helicase required for mitochondrial splicing of group I and II introns. Also required for efficient mitochondrial translation. This is ATP-dependent RNA helicase MSS116, mitochondrial (MSS116) from Candida glabrata (strain ATCC 2001 / BCRC 20586 / JCM 3761 / NBRC 0622 / NRRL Y-65 / CBS 138) (Yeast).